A 137-amino-acid chain; its full sequence is Putative pre-16S rRNA nuclease (137 aa).

Belongs to the YqgF nuclease family.

The protein resides in the cytoplasm. In terms of biological role, could be a nuclease involved in processing of the 5'-end of pre-16S rRNA. This chain is Putative pre-16S rRNA nuclease, found in Clostridium perfringens (strain ATCC 13124 / DSM 756 / JCM 1290 / NCIMB 6125 / NCTC 8237 / Type A).